A 375-amino-acid polypeptide reads, in one-letter code: Chaperone protein DnaJ (375 aa).

In terms of domain architecture, J spans 4–68; the sequence is DYYETLGVDR…ETRARYDQFG (65 aa). The CR-type zinc-finger motif lies at 134 to 216; the sequence is GGEKEIRIPH…CGGAGRKQET (83 aa). Zn(2+) contacts are provided by Cys-147, Cys-150, Cys-164, Cys-167, Cys-190, Cys-193, Cys-204, and Cys-207. CXXCXGXG motif repeat units follow at residues 147–154, 164–171, 190–197, and 204–211; these read CQVCNGSG, CSTCNGAG, CPDCNGAG, and CDACGGAG.

Belongs to the DnaJ family. Homodimer. Zn(2+) serves as cofactor.

It localises to the cytoplasm. In terms of biological role, participates actively in the response to hyperosmotic and heat shock by preventing the aggregation of stress-denatured proteins and by disaggregating proteins, also in an autonomous, DnaK-independent fashion. Unfolded proteins bind initially to DnaJ; upon interaction with the DnaJ-bound protein, DnaK hydrolyzes its bound ATP, resulting in the formation of a stable complex. GrpE releases ADP from DnaK; ATP binding to DnaK triggers the release of the substrate protein, thus completing the reaction cycle. Several rounds of ATP-dependent interactions between DnaJ, DnaK and GrpE are required for fully efficient folding. Also involved, together with DnaK and GrpE, in the DNA replication of plasmids through activation of initiation proteins. In Rippkaea orientalis (strain PCC 8801 / RF-1) (Cyanothece sp. (strain PCC 8801)), this protein is Chaperone protein DnaJ.